The sequence spans 202 residues: Mevalonate-3-phosphate 5-kinase (202 aa).

It catalyses the reaction (R)-3-phosphomevalonate + ATP = (R)-3,5-bisphosphomevalonate + ADP + H(+). The protein operates within isoprenoid biosynthesis; isopentenyl diphosphate biosynthesis via mevalonate pathway. Its function is as follows. Phosphorylates mevalonate 3-phosphate to form mevalonate 3,5-bisphosphate. Functions in an alternative mevalonate pathway, only present in extreme acidophiles of the Thermoplasmatales order, which passes through mevalonate 3-phosphate rather than mevalonate 5-phosphate. This chain is Mevalonate-3-phosphate 5-kinase, found in Thermoplasma acidophilum (strain ATCC 25905 / DSM 1728 / JCM 9062 / NBRC 15155 / AMRC-C165).